Consider the following 388-residue polypeptide: MVRDSMAAAFRPSNRVLLQALQILVYPGVGGSGSVSCRCPLGAKRYLLTDNVVKLKEFQQKKVAVACNLSGTKETYFRNLKKKLTQNKLILKGELITLLHLCESRDHVELAKNVIYRYHAENKNFTLGEYKFGPLFVRLCYELDLEESAVELMKDQHLRGFFSDSTSFNILMDMLFIKGKYKSALQVLIEMKNQDVKFTKDTYVLAFAICYKLNSPESFKICTTLREEALLKGEILSRRASCFAVALALNQNEMAKAVSIFSQIMNPESIACINLNIIIHIQSNMLENLIKTLKNAAEGNLSKFVKRHVFSEEVLAKVREKVKDVPALVAKFDEIYGTLHITGQVTTDSLDAVLCHTPRDRKSHTLLLNKRMVSRRTFQPLSQSLLAE.

Residues 166–200 (TSFNILMDMLFIKGKYKSALQVLIEMKNQDVKFTK) form a PPR repeat. Ser-382 carries the post-translational modification Phosphoserine.

It belongs to the PTCD2 family.

It is found in the mitochondrion. In terms of biological role, involved in mitochondrial RNA maturation and mitochondrial respiratory chain function. This Homo sapiens (Human) protein is Pentatricopeptide repeat-containing protein 2, mitochondrial (PTCD2).